We begin with the raw amino-acid sequence, 413 residues long: 2,3-diketo-5-methylthiopentyl-1-phosphate enolase (413 aa).

Catalysis depends on K98, which acts as the Proton acceptor. Substrate contacts are provided by residues K147, 173–176, H264, G337, and 359–360; these read KDDE and GG. 3 residues coordinate Mg(2+): K173, D175, and E176. Position 173 is an N6-carboxylysine (K173).

Belongs to the RuBisCO large chain family. Type IV subfamily. Homodimer. Mg(2+) is required as a cofactor.

The enzyme catalyses 5-methylsulfanyl-2,3-dioxopentyl phosphate = 2-hydroxy-5-methylsulfanyl-3-oxopent-1-enyl phosphate. It functions in the pathway amino-acid biosynthesis; L-methionine biosynthesis via salvage pathway; L-methionine from S-methyl-5-thio-alpha-D-ribose 1-phosphate: step 3/6. Functionally, catalyzes the enolization of 2,3-diketo-5-methylthiopentyl-1-phosphate (DK-MTP-1-P) into 2-hydroxy-3-keto-5-methylthiopentenyl-1-phosphate (HK-MTPenyl-1-P). The polypeptide is 2,3-diketo-5-methylthiopentyl-1-phosphate enolase (Geobacillus thermodenitrificans (strain NG80-2)).